A 110-amino-acid chain; its full sequence is Large ribosomal subunit protein uL24 (110 aa).

Belongs to the universal ribosomal protein uL24 family. As to quaternary structure, part of the 50S ribosomal subunit.

Functionally, one of two assembly initiator proteins, it binds directly to the 5'-end of the 23S rRNA, where it nucleates assembly of the 50S subunit. Its function is as follows. One of the proteins that surrounds the polypeptide exit tunnel on the outside of the subunit. This chain is Large ribosomal subunit protein uL24, found in Desulfovibrio desulfuricans (strain ATCC 27774 / DSM 6949 / MB).